A 114-amino-acid polypeptide reads, in one-letter code: Endoribonuclease MazF2 (114 aa).

The protein belongs to the PemK/MazF family. As to quaternary structure, probably forms a complex with cognate antitoxin MazE2.

In terms of biological role, toxic component of a type II toxin-antitoxin (TA) system. Acts as an endoribonuclease on single-strand RNA, cleaving between the second and third bases in the sequences CUCCU and UUCCU. Neutralized by coexpression with cognate antitoxin MazE2. The chain is Endoribonuclease MazF2 (mazF2) from Mycobacterium bovis (strain ATCC BAA-935 / AF2122/97).